The sequence spans 343 residues: Major histocompatibility complex class I-related protein 1 (343 aa).

Residues methionine 1–threonine 18 form the signal peptide. The alpha-1 stretch occupies residues arginine 19–serine 105. The tract at residues arginine 19 to threonine 197 is antigen-binding cleft. Topologically, residues arginine 19–alanine 298 are extracellular. Residues tyrosine 25 and arginine 27 each contribute to the 8-(9H-purin-6-yl)-2-oxa-8-azabicyclo[3.3.1]nona-3,6-diene-4,6-dicarbaldehyde site. 5-(2-oxoethylideneamino)-6-(D-ribitylamino)uracil is bound by residues arginine 27, serine 42, and lysine 61. Residues arginine 27, serine 42, and lysine 61 each contribute to the 5-(2-oxopropylideneamino)-6-(D-ribitylamino)uracil site. Residues arginine 27, serine 42, and lysine 61 each contribute to the 7-hydroxy-6-methyl-8-(1-D-ribityl)lumazine site. Positions 61 and 76 each coordinate 8-(9H-purin-6-yl)-2-oxa-8-azabicyclo[3.3.1]nona-3,6-diene-4,6-dicarbaldehyde. Lysine 61 contacts 2-amino-4-oxopteridine-6-carbaldehyde. Residue lysine 61 coordinates pyridoxal. A glycan (N-linked (GlcNAc...) asparagine) is linked at asparagine 103. Positions glycine 106–threonine 197 are alpha-2. Position 112 (arginine 112) interacts with 8-(9H-purin-6-yl)-2-oxa-8-azabicyclo[3.3.1]nona-3,6-diene-4,6-dicarbaldehyde. Residues arginine 112, tyrosine 170, and glutamine 171 each contribute to the 5-(2-oxoethylideneamino)-6-(D-ribitylamino)uracil site. 3 residues coordinate 5-(2-oxopropylideneamino)-6-(D-ribitylamino)uracil: arginine 112, tyrosine 170, and glutamine 171. Residues arginine 112, tyrosine 170, and glutamine 171 each coordinate 7-hydroxy-6-methyl-8-(1-D-ribityl)lumazine. 2 disulfides stabilise this stretch: cysteine 116–cysteine 179 and cysteine 218–cysteine 274. An alpha-3 region spans residues glutamate 198–glutamine 289. The Ig-like C1-type domain occupies proline 200–serine 302. The tract at residues glutamate 290 to alanine 298 is connecting peptide. The chain crosses the membrane as a helical span at residues asparagine 299 to tryptophan 319. Over arginine 320–serine 343 the chain is Cytoplasmic.

In terms of assembly, heterotrimer that consists of MR1, B2M and metabolite antigen. Major classes of metabolite ligands presented by MR1 include riboflavin-related antigens, pyrimidines and ribityl lumazines, nucleobase adducts and folate derivatives. Forms reversible covalent Schiff base complexes with microbial pyrimidine-based metabolite, which serves as a molecular switch triggering complete folding, stable association with B2M and translocation of the ternary complex from endoplasmic reticulum to the plasma membrane. Alternatively, forms non-Schiff base complexes with ribityl lumazines. On antigen-presenting cells, the ternary complex interacts with TCR on MR1-restricted T cells. Interacts with TAPBP and TAPBPL chaperones in the endoplasmic reticulum. TAPBP associated or not with MHC class I peptide loading complex binds ligand-free MR1 or MR1-B2M complex, providing for stable MR1 pools ready for metabolite antigen processing. TAPBPL interacts with MR1 in a ligand-independent way; this interaction may stabilize MR1 pool and facilitate ligand loading and dissociation. Structurally, MR1-B2M heterodimer adopts a topology similar to classical MHC class I molecules, with alpha-1 and alpha-2 domains of MR1 forming the antigen-binding cleft composed of two alpha-helices resting on a floor of 7-stranded anti-parallel beta-pleated sheet. MR1-B2M heterodimer (via alpha-helices) interacts with TCR (via CDR domains). N-glycosylated. In terms of tissue distribution, expressed in kidney, liver, testis, spleen, thymus, brain, and heart.

Its subcellular location is the cell membrane. The protein resides in the endoplasmic reticulum membrane. It localises to the golgi apparatus membrane. It is found in the early endosome membrane. The protein localises to the late endosome membrane. Its function is as follows. Antigen-presenting molecule specialized in displaying microbial pyrimidine-based metabolites to alpha-beta T cell receptors (TCR) on innate-type mucosal-associated invariant T (MAIT) cells. In complex with B2M preferentially presents riboflavin-derived metabolites to semi-invariant TCRs on MAIT cells, guiding immune surveillance of the microbial metabolome at mucosal epithelial barriers. Signature pyrimidine-based microbial antigens are generated via non-enzymatic condensation of metabolite intermediates of the riboflavin pathway with by-products arising from other metabolic pathways such as glycolysis. Typical potent antigenic metabolites are 5-(2-oxoethylideneamino)-6-D-ribitylaminouracil (5-OE-RU) and 5-(2-oxopropylideneamino)-6-D-ribitylaminouracil (5-OP-RU), products of condensation of 5-amino-6-D-ribityaminouracil (5-A-RU) with glyoxal or methylglyoxal by-products, respectively. May present microbial antigens to various MAIT cell subsets, providing for unique recognition of diverse microbes, including pathogens that do not synthesize riboflavin. Upon antigen recognition, elicits rapid innate-type MAIT cell activation to eliminate pathogenic microbes by directly killing infected cells. During T cell development, drives thymic selection and post-thymic terminal differentiation of MAIT cells in a process dependent on commensal microflora. Acts as an immune sensor of cancer cell metabolome. May present a tumor-specific or -associated metabolite essential for cancer cell survival to a pan-cancer TCR on a non-MAIT CD8-positive T cell clone, triggering T cell-mediated killing of a wide range of cancer cell types. May present tumor-enriched pyridoxal and pyridoxal 5'-phosphate antigens, enabling preferential recognition of cancer cells. Presents nucleobase carbonyl adducts generated during oxidative stress. Captures M3Ade, a nucleobase adduct composed of one adenine modified by a malondialdehyde trimer, for recognition by MR1-restricted T cell clones expressing a polyclonal TCR repertoire. The sequence is that of Major histocompatibility complex class I-related protein 1 from Rattus norvegicus (Rat).